A 118-amino-acid chain; its full sequence is uncharacterized protein (118 aa).

This is an uncharacterized protein from Escherichia coli O157:H7.